A 382-amino-acid chain; its full sequence is ATP phosphoribosyltransferase regulatory subunit (382 aa).

The protein belongs to the class-II aminoacyl-tRNA synthetase family. HisZ subfamily. In terms of assembly, heteromultimer composed of HisG and HisZ subunits.

The protein localises to the cytoplasm. Its pathway is amino-acid biosynthesis; L-histidine biosynthesis; L-histidine from 5-phospho-alpha-D-ribose 1-diphosphate: step 1/9. Functionally, required for the first step of histidine biosynthesis. May allow the feedback regulation of ATP phosphoribosyltransferase activity by histidine. This chain is ATP phosphoribosyltransferase regulatory subunit, found in Burkholderia cenocepacia (strain HI2424).